The following is a 47-amino-acid chain: Small, acid-soluble spore protein N (47 aa).

The interval Met1–Glu47 is disordered.

Belongs to the SspN family.

It is found in the spore core. In Bacillus licheniformis (strain ATCC 14580 / DSM 13 / JCM 2505 / CCUG 7422 / NBRC 12200 / NCIMB 9375 / NCTC 10341 / NRRL NRS-1264 / Gibson 46), this protein is Small, acid-soluble spore protein N.